Consider the following 333-residue polypeptide: Phenylalanine--tRNA ligase alpha subunit (333 aa).

Glu-254 contributes to the Mg(2+) binding site.

It belongs to the class-II aminoacyl-tRNA synthetase family. Phe-tRNA synthetase alpha subunit type 1 subfamily. In terms of assembly, tetramer of two alpha and two beta subunits. Mg(2+) is required as a cofactor.

The protein resides in the cytoplasm. The enzyme catalyses tRNA(Phe) + L-phenylalanine + ATP = L-phenylalanyl-tRNA(Phe) + AMP + diphosphate + H(+). The chain is Phenylalanine--tRNA ligase alpha subunit from Xylella fastidiosa (strain M23).